Consider the following 339-residue polypeptide: Dihydroorotate dehydrogenase (quinone) (339 aa).

Residues 62-66 (AGMDK) and Thr86 each bind FMN. Lys66 is a binding site for substrate. Substrate is bound at residue 111–115 (NRMGF). FMN-binding residues include Asn139 and Asn172. Asn172 is a substrate binding site. Ser175 serves as the catalytic Nucleophile. Asn177 is a binding site for substrate. Positions 217 and 245 each coordinate FMN. 246 to 247 (NT) is a binding site for substrate. Residues Gly268, Gly297, and 318 to 319 (YS) each bind FMN.

This sequence belongs to the dihydroorotate dehydrogenase family. Type 2 subfamily. In terms of assembly, monomer. Requires FMN as cofactor.

Its subcellular location is the cell membrane. The enzyme catalyses (S)-dihydroorotate + a quinone = orotate + a quinol. It participates in pyrimidine metabolism; UMP biosynthesis via de novo pathway; orotate from (S)-dihydroorotate (quinone route): step 1/1. Functionally, catalyzes the conversion of dihydroorotate to orotate with quinone as electron acceptor. The protein is Dihydroorotate dehydrogenase (quinone) of Shewanella sediminis (strain HAW-EB3).